A 417-amino-acid polypeptide reads, in one-letter code: Lipoyl synthase, mitochondrial (417 aa).

Positions 35 to 56 (EANPTDLAGLKRKAKRRPTKLA) are disordered. Basic residues predominate over residues 44-53 (LKRKAKRRPT). Residues Cys-122, Cys-127, Cys-133, Cys-152, Cys-156, Cys-159, and Ser-367 each coordinate [4Fe-4S] cluster. A Radical SAM core domain is found at 137 to 356 (KKSEATATIM…RDKALEMGFL (220 aa)). The interval 389–417 (IEEQQHDKENNNLLLSKEDEKTTQEKANF) is disordered. Over residues 391–417 (EQQHDKENNNLLLSKEDEKTTQEKANF) the composition is skewed to basic and acidic residues.

Belongs to the radical SAM superfamily. Lipoyl synthase family. The cofactor is [4Fe-4S] cluster.

It is found in the mitochondrion. The catalysed reaction is [[Fe-S] cluster scaffold protein carrying a second [4Fe-4S](2+) cluster] + N(6)-octanoyl-L-lysyl-[protein] + 2 oxidized [2Fe-2S]-[ferredoxin] + 2 S-adenosyl-L-methionine + 4 H(+) = [[Fe-S] cluster scaffold protein] + N(6)-[(R)-dihydrolipoyl]-L-lysyl-[protein] + 4 Fe(3+) + 2 hydrogen sulfide + 2 5'-deoxyadenosine + 2 L-methionine + 2 reduced [2Fe-2S]-[ferredoxin]. It functions in the pathway protein modification; protein lipoylation via endogenous pathway; protein N(6)-(lipoyl)lysine from octanoyl-[acyl-carrier-protein]: step 2/2. Catalyzes the radical-mediated insertion of two sulfur atoms into the C-6 and C-8 positions of the octanoyl moiety bound to the lipoyl domains of lipoate-dependent enzymes, thereby converting the octanoylated domains into lipoylated derivatives. The protein is Lipoyl synthase, mitochondrial of Komagataella phaffii (strain GS115 / ATCC 20864) (Yeast).